Reading from the N-terminus, the 373-residue chain is Transcription factor NF-E2 45 kDa subunit (373 aa).

Disordered regions lie at residues 1-22 (MPPC…GELG) and 40-60 (LNVP…PGPL). The segment at 1 to 83 (MPPCPPQPNR…AGFTLPPPPY (83 aa)) is required for interaction with MAPK8. The transactivation domain stretch occupies residues 1–206 (MPPCPPQPNR…PPTETPLVLE (206 aa)). Short sequence motifs (PXY motif) lie at residues 61-65 (PPPTY) and 79-83 (PPPPY). The disordered stretch occupies residues 131–163 (LPVGQPKPQEDPESDSGLSLNYSDAESLELEGT). Ser157 carries the phosphoserine; by MAPK8 modification. Ser170 bears the Phosphoserine; by PKA mark. The interval 206–225 (ESSSGPVRAKPAVRGEAGSR) is disordered. The region spanning 266-329 (LVRDIRRRGK…EVMRQQLTEL (64 aa)) is the bZIP domain. The interval 268–287 (RDIRRRGKNKVAAQNCRKRK) is basic motif. The segment at 291-298 (IVQLEREL) is leucine-zipper. Lys368 participates in a covalent cross-link: Glycyl lysine isopeptide (Lys-Gly) (interchain with G-Cter in SUMO); alternate. Lys368 is covalently cross-linked (Glycyl lysine isopeptide (Lys-Gly) (interchain with G-Cter in SUMO1); alternate).

Belongs to the bZIP family. CNC subfamily. As to quaternary structure, homodimer; can bind DNA as a homodimer. Erythroid transcription activator nuclear factor erythroid-derived 2 (NF-E2), composed of a heterodimer of NFE2 and MAFK, possesses transactivation activity on beta-globin. Also forms high affinity heterodimer with MAFG; the interaction promotes erythropoiesis. Interacts (via the PXY motif 1) with ITCH (via the WW 1 domain); the interaction promotes 'Lys63'-linked ubiquitination of NFE2, translocates it to the cytoplasm and inhibits its transactivation activity. Interacts with KMT2D/MLL2; the interaction promotes transactivation of the beta-globin locus. Interacts with MAPK8 (phosphorylated form); the interaction leads to phosphorylation of NFE2 in undifferentiated cells. Post-translationally, phosphorylated on serine residues. In undifferentiated erythrocytes, phosphorylated by MAPK8 which then leads to ubiquitination and protein degradation. Sumoylated. Sumoylation is required for translocation to nuclear bodies PODs, anchoring to the gene loci, and transactivation of the beta-globin gene. In terms of processing, ubiquitinated mainly by 'Lys63'-linked ubiquitin. Polyubiquitination with 'Lys63'-linked ubiquitin by ITCH retains NFE2 in the cytoplasm preventing its transactivation activity. In undifferentiated erythrocyte, ubiquitinated after MAPK8-mediatd phosphorylation leading to protein degradation.

It localises to the nucleus. The protein localises to the PML body. Its subcellular location is the cytoplasm. In terms of biological role, component of the NF-E2 complex essential for regulating erythroid and megakaryocytic maturation and differentiation. Binds to the hypersensitive site 2 (HS2) of the beta-globin control region (LCR). This subunit (NFE2) recognizes the TCAT/C sequence of the AP-1-like core palindrome present in a number of erythroid and megakaryocytic gene promoters. Requires MAFK or other small MAF proteins for binding to the NF-E2 motif. May play a role in all aspects of hemoglobin production from globin and heme synthesis to procurement of iron. The protein is Transcription factor NF-E2 45 kDa subunit (Nfe2) of Rattus norvegicus (Rat).